We begin with the raw amino-acid sequence, 144 residues long: Large ribosomal subunit protein uL11 (144 aa).

The protein belongs to the universal ribosomal protein uL11 family. Part of the ribosomal stalk of the 50S ribosomal subunit. Interacts with L10 and the large rRNA to form the base of the stalk. L10 forms an elongated spine to which L12 dimers bind in a sequential fashion forming a multimeric L10(L12)X complex. Post-translationally, one or more lysine residues are methylated.

Forms part of the ribosomal stalk which helps the ribosome interact with GTP-bound translation factors. This Streptomyces griseus subsp. griseus (strain JCM 4626 / CBS 651.72 / NBRC 13350 / KCC S-0626 / ISP 5235) protein is Large ribosomal subunit protein uL11.